Here is a 457-residue protein sequence, read N- to C-terminus: UDP-N-acetylmuramate--L-alanine ligase (457 aa).

112 to 118 (GTHGKTT) is a binding site for ATP.

The protein belongs to the MurCDEF family.

The protein resides in the cytoplasm. It carries out the reaction UDP-N-acetyl-alpha-D-muramate + L-alanine + ATP = UDP-N-acetyl-alpha-D-muramoyl-L-alanine + ADP + phosphate + H(+). The protein operates within cell wall biogenesis; peptidoglycan biosynthesis. In terms of biological role, cell wall formation. The polypeptide is UDP-N-acetylmuramate--L-alanine ligase (Solidesulfovibrio magneticus (strain ATCC 700980 / DSM 13731 / RS-1) (Desulfovibrio magneticus)).